The following is a 786-amino-acid chain: Endonuclease MutS2 (786 aa).

335–342 (GPNTGGKT) is a binding site for ATP. The segment at 529–549 (SQKNAERERKEAEEHRKQSEK) is disordered. One can recognise a Smr domain in the interval 711–786 (LDLRGERYED…GLGVTVVELK (76 aa)).

The protein belongs to the DNA mismatch repair MutS family. MutS2 subfamily. Homodimer. Binds to stalled ribosomes, contacting rRNA.

In terms of biological role, endonuclease that is involved in the suppression of homologous recombination and thus may have a key role in the control of bacterial genetic diversity. Functionally, acts as a ribosome collision sensor, splitting the ribosome into its 2 subunits. Detects stalled/collided 70S ribosomes which it binds and splits by an ATP-hydrolysis driven conformational change. Acts upstream of the ribosome quality control system (RQC), a ribosome-associated complex that mediates the extraction of incompletely synthesized nascent chains from stalled ribosomes and their subsequent degradation. Probably generates substrates for RQC. In Bacillus mycoides (strain KBAB4) (Bacillus weihenstephanensis), this protein is Endonuclease MutS2.